Here is a 106-residue protein sequence, read N- to C-terminus: Urease subunit beta (106 aa).

This sequence belongs to the urease beta subunit family. As to quaternary structure, heterotrimer of UreA (gamma), UreB (beta) and UreC (alpha) subunits. Three heterotrimers associate to form the active enzyme.

It is found in the cytoplasm. It catalyses the reaction urea + 2 H2O + H(+) = hydrogencarbonate + 2 NH4(+). The protein operates within nitrogen metabolism; urea degradation; CO(2) and NH(3) from urea (urease route): step 1/1. This chain is Urease subunit beta, found in Prochlorococcus marinus (strain MIT 9312).